The chain runs to 57 residues: UPF0391 membrane protein bsl5717 (57 aa).

2 helical membrane-spanning segments follow: residues 6 to 26 (WALI…TGIS) and 35 to 55 (FLFY…LTIF).

The protein belongs to the UPF0391 family.

Its subcellular location is the cell membrane. This is UPF0391 membrane protein bsl5717 from Bradyrhizobium diazoefficiens (strain JCM 10833 / BCRC 13528 / IAM 13628 / NBRC 14792 / USDA 110).